A 32-amino-acid chain; its full sequence is U6-ctenitoxin-Pr1a (32 aa).

3 disulfide bridges follow: cysteine 3–cysteine 17, cysteine 10–cysteine 21, and cysteine 16–cysteine 30.

Expressed by the venom gland.

The protein resides in the secreted. This chain is U6-ctenitoxin-Pr1a, found in Phoneutria reidyi (Brazilian Amazonian armed spider).